Reading from the N-terminus, the 597-residue chain is Putative Xaa-Pro dipeptidyl-peptidase (597 aa).

Active-site charge relay system residues include serine 224, aspartate 336, and histidine 367.

This sequence belongs to the peptidase S15 family.

It carries out the reaction Hydrolyzes Xaa-Pro-|- bonds to release unblocked, N-terminal dipeptides from substrates including Ala-Pro-|-p-nitroanilide and (sequentially) Tyr-Pro-|-Phe-Pro-|-Gly-Pro-|-Ile.. The sequence is that of Putative Xaa-Pro dipeptidyl-peptidase from Bacillus anthracis.